A 1687-amino-acid chain; its full sequence is Genome polyprotein (1687 aa).

Residues 1-13 (MRMATPSSAPSVR) are compositionally biased toward polar residues. The interval 1-56 (MRMATPSSAPSVRNTEKRKNKKASSKASVSFGAPSPLSSESEDEINYMTPPEQEAQ) is disordered. The interval 1–116 (MRMATPSSAP…FRRYPHLRPK (116 aa)) is interaction with host MAP1LC3A/LC3. The segment at 117 to 341 (EDRPDAPSHA…ISIFGEWQAE (225 aa)) is interaction with NTPase. The segment at 244-341 (SPVQDWNVDP…ISIFGEWQAE (98 aa)) is interaction with NS4. Host ER membrane association regions lie at residues 261–292 (KLRMVSDGILVALSAVIGRPIKNLLASVKPLN) and 302–341 (WTFSGIVNALILLAELFDIFWTPPDVTNWMISIFGEWQAE). The interval 342–518 (GPFDLALDVV…GKTCFCQNLA (177 aa)) is interaction with NS1-2, NS4 and homooligomerization. Residues 476 to 641 (RISMARAAFE…DDARARAPGD (166 aa)) form the SF3 helicase domain. Position 504 to 511 (504 to 511 (GRPGIGKT)) interacts with ATP. Residues 595–700 (VIIITTNQQT…AVALVHERHD (106 aa)) are important for mitochondrion targeting. The interval 893–898 (DEEYDE) is acidic. Position 896 is an O-(5'-phospho-RNA)-tyrosine (Tyr896). Positions 978–994 (WADDDRQVDYGEKINFE) are interaction with host EIF4G. The 178-residue stretch at 995-1172 (APVSIWSRVV…AATHGEPTLE (178 aa)) folds into the Peptidase C37 domain. Residues His1024, Asp1048, and Cys1133 each act as for 3CLpro activity in the active site. Positions 1416–1537 (RYHMDADYTR…STNLELDMVK (122 aa)) constitute a RdRp catalytic domain. The Mg(2+) site is built by Asp1420 and Asp1422. Cysteines 1482 and 1484 form a disulfide. Mg(2+) contacts are provided by Asp1524, Glu1525, and Ser1569.

As to quaternary structure, homodimer. Interacts with NTPase; this interaction increases the proapoptotic activity of the NTPase and is crucial for the formation of the viral replication complex. Interacts with NS4; this interaction is crucial for the formation of the viral replication complex. Interacts (via N-terminus) with host VAPA. Interacts with host VAPB. In terms of assembly, monomer. Homooligomer. Interacts with NS1-2; this interaction increases the proapoptotic activity of the NTPase and is crucial for the formation of the viral replication complex. Interacts with NS4; this interaction increases the proapoptotic activity of the NTPase. Interacts with host G3BP1; this interaction leads to the redistribution of G3BP1 and its cellular partners to the viral replication complexes, thereby preventing the assembly of stress granules. As to quaternary structure, homodimer. Monomer; in solution. In terms of assembly, interacts with NTPase; this interaction increases the proapoptotic activity of the NTPase. Interacts with NS1-2; this interaction is crucial for the formation of the viral replication complex. Monomer. Interacts with the RNA-directed RNA polymerase; this interaction induces the multimerization of the RdRp and enhances its activity. Interacts with host IEF4E; this interaction plays a role in translation of viral proteins. Interacts (via C-terminus) with host IEF4G1 (via central domain); this interaction plays a role in translation of viral proteins. As to quaternary structure, homohexamer; also forms fibrous hexameric oligomer. Interacts with the viral genome-linked protein; this interaction induces the multimerization of the RdRp and enhances its activity. Mg(2+) serves as cofactor. It depends on Mn(2+) as a cofactor. Specific enzymatic cleavages in vivo yield mature proteins. 3CLpro is first autocatalytically cleaved, then processes the whole polyprotein. Post-translationally, cleaved by host CASP3/caspase 3 at 18-22 h.p.i. The cleavage allows NS1 secretion, which is essential for intestinal infection and resistance to IFN-lambda. In terms of processing, VPg is uridylylated by the polymerase and is covalently attached to the 5'-end of the polyadenylated genomic and subgenomic RNAs. This uridylylated form acts as a nucleotide-peptide primer for the polymerase.

The protein localises to the host endoplasmic reticulum membrane. It is found in the secreted. Its subcellular location is the host endosome membrane. The protein resides in the host mitochondrion. It localises to the host cytoplasm. The protein localises to the host perinuclear region. The catalysed reaction is a ribonucleoside 5'-triphosphate + H2O = a ribonucleoside 5'-diphosphate + phosphate + H(+). The enzyme catalyses Endopeptidase with a preference for cleavage when the P1 position is occupied by Glu-|-Xaa and the P1' position is occupied by Gly-|-Yaa.. It carries out the reaction RNA(n) + a ribonucleoside 5'-triphosphate = RNA(n+1) + diphosphate. Its activity is regulated as follows. Inhibited by Suramin, Suramin-related compounds and NF023. Inhibited by PPNDS. Induces the proliferation of the host smooth ER membranes forming long tubular structures. These remodeled membranes probably form the viral factories that contain the replication complex. May play a role in viral replication by interacting with host VAPA, a vesicle-associated membrane protein that plays a role in SNARE-mediated vesicle fusion. This interaction may target replication complex to intracellular membranes. In terms of biological role, promotes intestinal tropism and persistent fecal shedding in strain CR6. This function requires Glu-94 and is present in persistant strains. Functionally, displays NTPase activity, but probably no helicase activity. Displays RNA chaperone-like activity and destabilizes dsRNA. Induces the formation of convoluted membranes derived from the host ER. These remodeled membranes probably form the viral factories that contain the replication complex. Initiates host cell death by targeting the mitochondrial outer membrane, leading to the permeabilization of mitochondria, programmed host cell death and viral egress. Externalization of host cardiolipin seems to be involved in the process. Probably plays a role in preventing the assembly of host stress granules. Its function is as follows. Probable key protein responsible for the formation of membrane alterations by the virus. Induces the formation of convoluted membranes derived from the host ER. These remodeled membranes probably form the viral factories that contain the replication complex. May play a role in targeting replication complex to intracellular membranes. Viral genome-linked protein is covalently linked to the 5'-end of the positive-strand, negative-strand genomic RNAs and subgenomic RNA. Acts as a genome-linked replication primer. May recruit ribosome to viral RNA thereby promoting viral proteins translation. Interacts with host translation initiation complex to allow the translation of viral proteins. Induces the formation of aggregates of RNA-directed RNA polymerase in the presence of RNA. Through its interaction with the viral RNA-directed RNA polymerase, plays a crucial role in enhancing the polymerase activity. In terms of biological role, processes the polyprotein. 3CLpro-RdRp is first released by autocleavage, then all other proteins are cleaved. May cleave host polyadenylate-binding protein thereby inhibiting cellular translation. Does not cleave host G3BP1. Functionally, replicates genomic and antigenomic RNA by recognizing replications specific signals. Also transcribes a subgenomic mRNA by initiating RNA synthesis internally on antigenomic RNA. This sgRNA codes for structural proteins. Catalyzes the covalent attachment VPg with viral RNAs. The polypeptide is Genome polyprotein (Norovirus (isolate Mouse/NoV/United States/MNV1/2002/GV) (MNV-1)).